We begin with the raw amino-acid sequence, 919 residues long: Transcriptional regulatory protein EDS1 (919 aa).

Residues 1 to 54 are disordered; it reads MSHHVPNLYGTPIRDPHERKRNSASMGEVNQSVSSRNCERGSEKGTKQRKKASR. A compositionally biased stretch (polar residues) spans 23–36; the sequence is SASMGEVNQSVSSR. A compositionally biased stretch (basic and acidic residues) spans 37–46; sequence NCERGSEKGT. A DNA-binding region (zn(2)-C6 fungal-type) is located at residues 56–85; sequence CDQCRRKRIKCRFDKHTGVCQGCLEVGEKC. The segment at 297–338 is disordered; the sequence is AGCPNKKLGTDGRSDKWDKNSTWKPVYRSSNPSHPSTEKNVS. A compositionally biased stretch (basic and acidic residues) spans 304–317; that stretch reads LGTDGRSDKWDKNS. Positions 318 to 338 are enriched in polar residues; the sequence is TWKPVYRSSNPSHPSTEKNVS.

In terms of assembly, binds DNA in a sequence-specific manner.

The protein resides in the nucleus. In Saccharomyces cerevisiae (strain RM11-1a) (Baker's yeast), this protein is Transcriptional regulatory protein EDS1 (EDS1).